We begin with the raw amino-acid sequence, 400 residues long: MTDFRTLDDAGPLQGKRVLLRVDLNVPMEGGRVTDATRIERVVPTIREIADAGGRVILLAHFGRPKGKPDPKDSLKPILSTLSEKLGRPVAFGEDCVGEAAASAIAALKDGDVILLENTRYHAGEEKNDPDFAKALAANGDIYVNEAFSAAHRAHASTEALARLLPAYAGRLMQAELDALTKGLEAPARPVIAIVGGAKVSTKIDLLENLVAKVDMLVIGGGMANTFLHAQGKDVGKSLCEKDLAETAKRILAAAKEKNCTIILPVDALVAREFKANAENETVPVDAVPSDAMILDVGASSIATIDGAIEEARTLVWNGPLGAFELTPFDTGTVAVAQHAARRTKAGQLVSVAGGGDTVAALNHAGVGEDFSYVSTAGGAFLEWLEGKELPGVEALRAQG.

Substrate contacts are provided by residues 23 to 25 (DLN), Arg-38, 61 to 64 (HFGR), Arg-120, and Arg-153. ATP-binding positions include Lys-203, Glu-325, and 355 to 358 (GGDT).

It belongs to the phosphoglycerate kinase family. As to quaternary structure, monomer.

Its subcellular location is the cytoplasm. The catalysed reaction is (2R)-3-phosphoglycerate + ATP = (2R)-3-phospho-glyceroyl phosphate + ADP. It participates in carbohydrate degradation; glycolysis; pyruvate from D-glyceraldehyde 3-phosphate: step 2/5. The chain is Phosphoglycerate kinase from Methylorubrum extorquens (strain PA1) (Methylobacterium extorquens).